The sequence spans 540 residues: GMP synthase [glutamine-hydrolyzing] (540 aa).

The region spanning lysine 29–aspartate 222 is the Glutamine amidotransferase type-1 domain. Cysteine 106 functions as the Nucleophile in the catalytic mechanism. Residues histidine 196 and glutamate 198 contribute to the active site. In terms of domain architecture, GMPS ATP-PPase spans tryptophan 223–arginine 415. Serine 250–alanine 256 provides a ligand contact to ATP.

In terms of assembly, homodimer.

The enzyme catalyses XMP + L-glutamine + ATP + H2O = GMP + L-glutamate + AMP + diphosphate + 2 H(+). It participates in purine metabolism; GMP biosynthesis; GMP from XMP (L-Gln route): step 1/1. Functionally, catalyzes the synthesis of GMP from XMP. The chain is GMP synthase [glutamine-hydrolyzing] from Rhodopseudomonas palustris (strain ATCC BAA-98 / CGA009).